Consider the following 254-residue polypeptide: NAD kinase (254 aa).

Asp44 functions as the Proton acceptor in the catalytic mechanism. NAD(+) is bound by residues 44–45 (DG), 114–115 (NE), Asp144, Ala152, 155–160 (TAYNYS), and Ala179.

Belongs to the NAD kinase family. A divalent metal cation serves as cofactor.

The protein resides in the cytoplasm. The catalysed reaction is NAD(+) + ATP = ADP + NADP(+) + H(+). In terms of biological role, involved in the regulation of the intracellular balance of NAD and NADP, and is a key enzyme in the biosynthesis of NADP. Catalyzes specifically the phosphorylation on 2'-hydroxyl of the adenosine moiety of NAD to yield NADP. In Cereibacter sphaeroides (strain ATCC 17025 / ATH 2.4.3) (Rhodobacter sphaeroides), this protein is NAD kinase.